The chain runs to 594 residues: UvrABC system protein C (594 aa).

The GIY-YIG domain maps to 14-91 (DQPGCYLMKD…IKKHDPKYNI (78 aa)). The region spanning 196 to 231 (KEVRSELETKMYEASEKLEFERAKELRDQIAHIDAI) is the UVR domain.

The protein belongs to the UvrC family. Interacts with UvrB in an incision complex.

It is found in the cytoplasm. The UvrABC repair system catalyzes the recognition and processing of DNA lesions. UvrC both incises the 5' and 3' sides of the lesion. The N-terminal half is responsible for the 3' incision and the C-terminal half is responsible for the 5' incision. This is UvrABC system protein C from Bacillus anthracis (strain A0248).